We begin with the raw amino-acid sequence, 350 residues long: MKEVSLRGISKTFGQLTVLDRIDLEIHSGEFLVLVGPSGCGKSTLLRMVAGLEPISGGDLVIGGERANELPPQKRNIAMVFQSYALFPHMTARENIGFGPRIRGEKAAETAAKVDHAASILNLHSYLDRYPRQLSGGQRQRVAMGRAIVREPSVFLFDEPLSNLDAQLRVQMRTEIKALHQRLKSTVIYVTHDQIEAMTMADRIVVMNQGKIQQIGAPLDLYDRPANKFVAGFIGSPSMSFIPGTVADGFFCTGEGKKIAVSAAAKGARAAEAGIRPENFVIAREGAGLTLVVEVIEPTGPETHIYGRIAGEPVRAVFRERIQLAPGEQVPVTAGSEHIHLFDKESGLPL.

Positions 4–234 constitute an ABC transporter domain; that stretch reads VSLRGISKTF…PANKFVAGFI (231 aa). ATP is bound at residue 36–43; the sequence is GPSGCGKS.

It belongs to the ABC transporter superfamily. As to quaternary structure, the complex is composed of two ATP-binding proteins (BRA0745), two transmembrane proteins (BRA0749) and a solute-binding protein (BRA0748).

It localises to the cell inner membrane. In terms of biological role, probably part of an ABC transporter complex. Probably responsible for energy coupling to the transport system. The protein is Putative ATP-binding protein BRA0745/BS1330_II0738 of Brucella suis biovar 1 (strain 1330).